A 225-amino-acid chain; its full sequence is UPF0758 protein BAV2405 (225 aa).

The MPN domain occupies 103 to 225 (AMKHPEEVRR…ALSMAERGLI (123 aa)). Zn(2+) is bound by residues H174, H176, and D187. The short motif at 174 to 187 (HNHPSGNPQPSAAD) is the JAMM motif element.

This sequence belongs to the UPF0758 family.

The chain is UPF0758 protein BAV2405 from Bordetella avium (strain 197N).